Reading from the N-terminus, the 977-residue chain is Ephrin type-A receptor 2 (977 aa).

The N-terminal stretch at 1–25 (MELRAVGFCLALLWGCALAAAAAQG) is a signal peptide. Positions 1-205 (MELRAVGFCL…YYKKCPEMLQ (205 aa)) are mediates interaction with CLDN4. Residues 26 to 538 (KEVVLLDFAA…STEGSANMAV (513 aa)) are Extracellular-facing. The Eph LBD domain maps to 27–205 (EVVLLDFAAM…YYKKCPEMLQ (179 aa)). Disulfide bonds link Cys69–Cys187 and Cys104–Cys114. Residues 329–433 (PPSAPNYLTA…TSRSFRTASV (105 aa)) enclose the Fibronectin type-III 1 domain. Asn408 and Asn436 each carry an N-linked (GlcNAc...) asparagine glycan. One can recognise a Fibronectin type-III 2 domain in the interval 439–530 (EPPKVRLEDR…KVHEFQTLST (92 aa)). The chain crosses the membrane as a helical span at residues 539–559 (IGGVAVGVVLLLVLAGVGLFI). Residues 560 to 977 (HRRRRNLRAR…DQVNTVGIPI (418 aa)) are Cytoplasmic-facing. 2 positions are modified to phosphoserine: Ser571 and Ser580. 2 positions are modified to phosphotyrosine; by autocatalysis: Tyr589 and Tyr595. The tract at residues 607-907 (TEIHPSCVAR…STSGSEGVPF (301 aa)) is mediates interaction with ARHGEF16. The Protein kinase domain occupies 614 to 876 (VARQKVIGAG…DIVSILDKLI (263 aa)). 620 to 628 (IGAGEFGEV) contacts ATP. The residue at position 629 (Tyr629) is a Phosphotyrosine. Lys647 is an ATP binding site. Thr648 is modified (phosphothreonine). The residue at position 736 (Tyr736) is a Phosphotyrosine; by autocatalysis. Residue Asp740 is the Proton acceptor of the active site. Position 773 is a phosphotyrosine; by autocatalysis (Tyr773). Residues Ser870, Ser893, Ser898, and Ser902 each carry the phosphoserine modification. A negatively regulates interaction with ARHGEF16 region spans residues 887–977 (DFDPRVSIRL…DQVNTVGIPI (91 aa)). Residues 905-969 (VPFRTVSEWL…AYSLLGLKDQ (65 aa)) form the SAM domain. Tyr922 carries the phosphotyrosine; by autocatalysis modification. Tyr931 is modified (phosphotyrosine). The short motif at 975–977 (IPI) is the PDZ-binding element.

Belongs to the protein kinase superfamily. Tyr protein kinase family. Ephrin receptor subfamily. In terms of assembly, homodimer. Interacts with INPPL1; regulates activated EPHA2 endocytosis and degradation. Interacts (inactivated form) with PTK2/FAK1 and interacts (EFNA1 ligand-activated form) with PTPN11; regulates integrin-mediated adhesion. Interacts with ARHGEF16, DOCK4 and ELMO2; mediates ligand-independent activation of RAC1 which stimulates cell migration. Interacts with CLDN4; phosphorylates CLDN4 and may regulate tight junctions. Interacts with ACP1. Interacts with CEMIP. Interacts with NCK1; may regulate EPHA2 activity in cell migration and adhesion. Interacts with SLA. Interacts (phosphorylated form) with VAV2, VAV3 and PI3-kinase p85 subunit (PIK3R1, PIK3R2 or PIK3R3); critical for the EFNA1-induced activation of RAC1 which stimulates cell migration. Interacts with ANKS1A. Interacts with TIMD4. Post-translationally, autophosphorylates. Phosphorylated at Ser-898 by PKB; serum-induced phosphorylation which targets EPHA2 to the cell leading edge and stimulates cell migration. Phosphorylation by PKB is inhibited by EFNA1-activated EPHA2 which regulates PKB activity via a reciprocal regulatory loop. Phosphorylated on tyrosine upon binding and activation by EFNA1. Phosphorylated residues Tyr-589 and Tyr-595 are required for binding VAV2 and VAV3 while phosphorylated residues Tyr-736 and Tyr-931 are required for binding PI3-kinase p85 subunit (PIK3R1, PIK3R2 or PIK3R3). These phosphorylated residues are critical for recruitment of VAV2 and VAV3 and PI3-kinase p85 subunit which transduce downstream signaling to activate RAC1 GTPase and cell migration. Dephosphorylation of Tyr-931 by PTPRF prevents the interaction of EPHA2 with NCK1. Phosphorylated at Ser-898 in response to TNF by RPS6KA1 and RPS6KA3; RPS6KA-EPHA2 signaling pathway controls cell migration. Phosphorylated at Ser-898 by PKA; blocks cell retraction induced by EPHA2 kinase activity. Dephosphorylated by ACP1. In terms of processing, ubiquitinated by CHIP/STUB1. Ubiquitination is regulated by the HSP90 chaperone and regulates the receptor stability and activity through proteasomal degradation. ANKS1A prevents ubiquitination and degradation. As to expression, expressed in the lung, intestine and liver. Expressed in myogenic progenitor cells.

The protein localises to the cell membrane. It is found in the cell projection. The protein resides in the ruffle membrane. Its subcellular location is the lamellipodium membrane. It localises to the cell junction. The protein localises to the focal adhesion. The enzyme catalyses L-tyrosyl-[protein] + ATP = O-phospho-L-tyrosyl-[protein] + ADP + H(+). Its function is as follows. Receptor tyrosine kinase which binds promiscuously membrane-bound ephrin-A family ligands residing on adjacent cells, leading to contact-dependent bidirectional signaling into neighboring cells. The signaling pathway downstream of the receptor is referred to as forward signaling while the signaling pathway downstream of the ephrin ligand is referred to as reverse signaling. Activated by the ligand ephrin-A1/EFNA1 regulates migration, integrin-mediated adhesion, proliferation and differentiation of cells. Regulates cell adhesion and differentiation through DSG1/desmoglein-1 and inhibition of the ERK1/ERK2 signaling pathway. May also participate in UV radiation-induced apoptosis and have a ligand-independent stimulatory effect on chemotactic cell migration. During development, may function in distinctive aspects of pattern formation and subsequently in development of several fetal tissues. Involved for instance in angiogenesis, in early hindbrain development and epithelial proliferation and branching morphogenesis during mammary gland development. Engaged by the ligand ephrin-A5/EFNA5 may regulate lens fiber cells shape and interactions and be important for lens transparency development and maintenance. With ephrin-A2/EFNA2 may play a role in bone remodeling through regulation of osteoclastogenesis and osteoblastogenesis. This is Ephrin type-A receptor 2 (Epha2) from Mus musculus (Mouse).